Consider the following 217-residue polypeptide: ATP phosphoribosyltransferase (217 aa).

It belongs to the ATP phosphoribosyltransferase family. Short subfamily. In terms of assembly, heteromultimer composed of HisG and HisZ subunits.

It is found in the cytoplasm. The catalysed reaction is 1-(5-phospho-beta-D-ribosyl)-ATP + diphosphate = 5-phospho-alpha-D-ribose 1-diphosphate + ATP. Its pathway is amino-acid biosynthesis; L-histidine biosynthesis; L-histidine from 5-phospho-alpha-D-ribose 1-diphosphate: step 1/9. Functionally, catalyzes the condensation of ATP and 5-phosphoribose 1-diphosphate to form N'-(5'-phosphoribosyl)-ATP (PR-ATP). Has a crucial role in the pathway because the rate of histidine biosynthesis seems to be controlled primarily by regulation of HisG enzymatic activity. The protein is ATP phosphoribosyltransferase (hisG) of Neisseria meningitidis serogroup A / serotype 4A (strain DSM 15465 / Z2491).